The sequence spans 128 residues: Transcription antitermination protein NusB (128 aa).

This sequence belongs to the NusB family.

In terms of biological role, involved in transcription antitermination. Required for transcription of ribosomal RNA (rRNA) genes. Binds specifically to the boxA antiterminator sequence of the ribosomal RNA (rrn) operons. The polypeptide is Transcription antitermination protein NusB (Exiguobacterium sp. (strain ATCC BAA-1283 / AT1b)).